Here is a 125-residue protein sequence, read N- to C-terminus: Large ribosomal subunit protein bL20 (125 aa).

It belongs to the bacterial ribosomal protein bL20 family.

Binds directly to 23S ribosomal RNA and is necessary for the in vitro assembly process of the 50S ribosomal subunit. It is not involved in the protein synthesizing functions of that subunit. The protein is Large ribosomal subunit protein bL20 of Zymomonas mobilis subsp. mobilis (strain ATCC 31821 / ZM4 / CP4).